The primary structure comprises 282 residues: Shikimate dehydrogenase (NADP(+)) (282 aa).

Shikimate is bound by residues 24–26 (SRS) and threonine 71. Lysine 75 (proton acceptor) is an active-site residue. Aspartate 87 is an NADP(+) binding site. Shikimate is bound by residues asparagine 96 and aspartate 112. NADP(+)-binding positions include 138-142 (GAGGA), 162-167 (NRTRIR), and leucine 227. Tyrosine 229 is a shikimate binding site. Glycine 250 contacts NADP(+).

The protein belongs to the shikimate dehydrogenase family. Homodimer.

It carries out the reaction shikimate + NADP(+) = 3-dehydroshikimate + NADPH + H(+). The protein operates within metabolic intermediate biosynthesis; chorismate biosynthesis; chorismate from D-erythrose 4-phosphate and phosphoenolpyruvate: step 4/7. Its function is as follows. Involved in the biosynthesis of the chorismate, which leads to the biosynthesis of aromatic amino acids. Catalyzes the reversible NADPH linked reduction of 3-dehydroshikimate (DHSA) to yield shikimate (SA). The chain is Shikimate dehydrogenase (NADP(+)) from Paracoccus denitrificans (strain Pd 1222).